Reading from the N-terminus, the 715-residue chain is Elongation factor G (715 aa).

In terms of domain architecture, tr-type G spans 12 to 309 (RRVRNIGIMA…GVIDYLPSPL (298 aa)). Residues 21–28 (AHIDAGKT), 108–112 (DTPGH), and 162–165 (NKMD) each bind GTP.

Belongs to the TRAFAC class translation factor GTPase superfamily. Classic translation factor GTPase family. EF-G/EF-2 subfamily.

It localises to the cytoplasm. Functionally, catalyzes the GTP-dependent ribosomal translocation step during translation elongation. During this step, the ribosome changes from the pre-translocational (PRE) to the post-translocational (POST) state as the newly formed A-site-bound peptidyl-tRNA and P-site-bound deacylated tRNA move to the P and E sites, respectively. Catalyzes the coordinated movement of the two tRNA molecules, the mRNA and conformational changes in the ribosome. The chain is Elongation factor G from Rubrobacter xylanophilus (strain DSM 9941 / JCM 11954 / NBRC 16129 / PRD-1).